We begin with the raw amino-acid sequence, 296 residues long: Protoheme IX farnesyltransferase (296 aa).

9 helical membrane-spanning segments follow: residues 9–29, 36–56, 75–95, 99–119, 133–153, 163–183, 209–229, 234–254, and 265–285; these read VTKPGIIFGNLISVIGGFLLA, YPLFLSTLLGVSLVVASGCVF, VLVKGLIDPKVSLIYASVLGI, LLLYVAANALAMMLAVIGFVI, VYGTLIGSLSGAAPPVIGYCA, LILLLIFSLWQMPHSYAIAIF, ITLYILAFMVATLMLTLSGYA, LVVAAAVSVWWLGMALRGYKA, and FVFSIIAITSLSVMMSVDFNV.

This sequence belongs to the UbiA prenyltransferase family. Protoheme IX farnesyltransferase subfamily.

It localises to the cell inner membrane. It carries out the reaction heme b + (2E,6E)-farnesyl diphosphate + H2O = Fe(II)-heme o + diphosphate. It functions in the pathway porphyrin-containing compound metabolism; heme O biosynthesis; heme O from protoheme: step 1/1. Functionally, converts heme B (protoheme IX) to heme O by substitution of the vinyl group on carbon 2 of heme B porphyrin ring with a hydroxyethyl farnesyl side group. This is Protoheme IX farnesyltransferase from Yersinia pestis bv. Antiqua (strain Antiqua).